Reading from the N-terminus, the 98-residue chain is NADH-ubiquinone oxidoreductase chain 4L (98 aa).

3 consecutive transmembrane segments (helical) span residues 1–21 (MSITYMNMFMAFTISLLGLLL), 29–49 (SLLCLEGMMLSLFVMMTMIIL), and 61–81 (IILLVFAACEAALGLSLLVMV).

The protein belongs to the complex I subunit 4L family. As to quaternary structure, core subunit of respiratory chain NADH dehydrogenase (Complex I) which is composed of 45 different subunits.

It localises to the mitochondrion inner membrane. The enzyme catalyses a ubiquinone + NADH + 5 H(+)(in) = a ubiquinol + NAD(+) + 4 H(+)(out). Core subunit of the mitochondrial membrane respiratory chain NADH dehydrogenase (Complex I) which catalyzes electron transfer from NADH through the respiratory chain, using ubiquinone as an electron acceptor. Part of the enzyme membrane arm which is embedded in the lipid bilayer and involved in proton translocation. The sequence is that of NADH-ubiquinone oxidoreductase chain 4L (MT-ND4L) from Platyrrhinus dorsalis (Thomas's broad-nosed bat).